The primary structure comprises 196 residues: Calcineurin B homologous protein 2 (196 aa).

G2 is lipidated: N-myristoyl glycine. EF-hand domains lie at 26 to 61 (ASLL…AVNP), 71 to 106 (FPNG…PKQP), 111 to 146 (SRMN…MVGV), and 152 to 187 (QLES…MNIE). Phosphoserine is present on S27. D124, D126, D128, K130, and E135 together coordinate Ca(2+). The Nuclear export signal motif lies at 137-148 (LQVLRLMVGVQV). Ca(2+) is bound by residues D165, D167, D169, and E176.

This sequence belongs to the calcineurin regulatory subunit family. CHP subfamily. In terms of assembly, interacts with PPP3CA. Interacts with SLC9A1/NHE1; the interaction occurs in a calcium-dependent manner. Interacts with SLC9A1/NHE1.

It localises to the cytoplasm. Its subcellular location is the nucleus. It is found in the cell membrane. In terms of biological role, functions as an integral cofactor in cell pH regulation by controlling plasma membrane-type Na(+)/H(+) exchange activity. Binds to and activates SLC9A1/NHE1 in a serum-independent manner, thus increasing pH and protecting cells from serum deprivation-induced death. Also plays a role in the regulation of cell proliferation and tumor growth by increasing the phosphatase activity of PPP3CA in a calcium-dependent manner. Activator of the calcineurin/NFAT signaling pathway. Involved in the cytoplasmic translocation of the transcription factor NFATC3 to the nucleus. This chain is Calcineurin B homologous protein 2 (Chp2), found in Mus musculus (Mouse).